The sequence spans 295 residues: Ethanolamine ammonia-lyase small subunit (295 aa).

Residues valine 208 and glutamate 229 each contribute to the adenosylcob(III)alamin site.

The protein belongs to the EutC family. The basic unit is a heterodimer which dimerizes to form tetramers. The heterotetramers trimerize; 6 large subunits form a core ring with 6 small subunits projecting outwards. The cofactor is adenosylcob(III)alamin.

The protein resides in the bacterial microcompartment. The enzyme catalyses ethanolamine = acetaldehyde + NH4(+). Its pathway is amine and polyamine degradation; ethanolamine degradation. In terms of biological role, catalyzes the deamination of various vicinal amino-alcohols to oxo compounds. Allows this organism to utilize ethanolamine as the sole source of nitrogen and carbon in the presence of external vitamin B12. The protein is Ethanolamine ammonia-lyase small subunit of Fusobacterium nucleatum subsp. nucleatum (strain ATCC 25586 / DSM 15643 / BCRC 10681 / CIP 101130 / JCM 8532 / KCTC 2640 / LMG 13131 / VPI 4355).